Consider the following 87-residue polypeptide: Large ribosomal subunit protein bL27 (87 aa).

The tract at residues 1–21 (MAHKKAGGSSRNGRDSESKRL) is disordered.

Belongs to the bacterial ribosomal protein bL27 family.

The chain is Large ribosomal subunit protein bL27 from Paraburkholderia phytofirmans (strain DSM 17436 / LMG 22146 / PsJN) (Burkholderia phytofirmans).